A 93-amino-acid chain; its full sequence is Small ribosomal subunit protein uS19 (93 aa).

This sequence belongs to the universal ribosomal protein uS19 family.

Protein S19 forms a complex with S13 that binds strongly to the 16S ribosomal RNA. In Microcystis aeruginosa (strain NIES-843 / IAM M-2473), this protein is Small ribosomal subunit protein uS19.